Here is a 443-residue protein sequence, read N- to C-terminus: Threonine/serine transporter TdcC (443 aa).

11 helical membrane passes run 24–44 (WVLG…PISA), 45–65 (GIGG…IAFF), 95–115 (VGGV…LWIY), 140–160 (VVAL…KDLM), 163–183 (VMGY…LSLI), 207–227 (ILVT…FSPI), 259–279 (ASVL…FTLS), 319–339 (ASII…LGTL), 363–383 (LNMI…YINP), 385–405 (ILDL…CLLP), and 423–443 (SNYF…YQLM).

The protein belongs to the amino acid/polyamine transporter 2 family. SdaC/TdcC subfamily.

It localises to the cell inner membrane. The enzyme catalyses L-threonine(in) + H(+)(in) = L-threonine(out) + H(+)(out). The catalysed reaction is L-serine(in) + H(+)(in) = L-serine(out) + H(+)(out). Its function is as follows. Involved in the import of threonine and serine into the cell, with the concomitant import of a proton (symport system). The sequence is that of Threonine/serine transporter TdcC from Edwardsiella tarda.